We begin with the raw amino-acid sequence, 206 residues long: Heterochromatin protein 1 (206 aa).

Disordered stretches follow at residues 1 to 24 and 47 to 145; these read MGKKIDNPESSAKVSDAEEEEEEY and GYPE…GFDR. S11 and S15 each carry phosphoserine. One can recognise a Chromo 1 domain in the interval 24-82; that stretch reads YAVEKIIDRRVRKGKVEYYLKWKGYPETENTWEPENNLDCQDLIQQYEASRKDEEKSAA. Residues 50 to 60 show a composition bias toward low complexity; that stretch reads ETENTWEPENN. Over residues 72-98 the composition is skewed to basic and acidic residues; the sequence is ASRKDEEKSAASKKDRPSSSAKAKETQ. The binds to Su(var)39 stretch occupies residues 95–206; that stretch reads KETQGRASSS…RLSWYSDNED (112 aa). 3 positions are modified to phosphoserine: S102, S103, and S113. Phosphothreonine is present on residues T127, T128, and T134. One can recognise a Chromo 2 domain in the interval 147–205; sequence LEAEKILGASDNNGRLTFLIQFKGVDQAEMVPSSVANEKIPRMVIHFYEERLSWYSDNE.

Homodimer. Probably associates with Su(var)3-9. Interacts with Mcm10. Interacts (via chromoshadow domain) with piwi (via N-terminal region). Interacts with Rrp6. Associates with and may be part of the HipHop-HOAP telomere capping complex but is not required for its stability or telomere localization. Interacts (via the chromo domain 2 (chromoshadow domain) and the hinge region between chromo domains 1 and 2) with cav/HOAP (via C-terminus); the interaction is direct. Each molecule of cav/HOAP interacts with 2 molecules of Su(var)205/HP1. Interacts with HipHop (via N-terminus). Interacts with moi/modigliani; the interaction is direct. Interacts (via chromo domain 1) with His3/histone 3 (via N-terminal tail methylated at 'Lys-10'); the interaction is direct. In terms of tissue distribution, salivary gland (at protein level).

Its subcellular location is the nucleus. The protein localises to the nucleoplasm. The protein resides in the chromosome. It is found in the telomere. Structural component of heterochromatin, involved in gene repression and the modification of position-effect-variegation. Recognizes and binds histone H3 tails methylated at 'Lys-9', leading to epigenetic repression. Stabilizes chromatin-associated RNAs probably by binding to them and thereby preventing their degradation. Associates with, and may be a part of, the HipHop-HOAP complex that recruits the MTV complex to form the terminin telomere-capping complex, which binds to chromosome ends in a sequence-independent manner and prevents telomere fusion. Telomere capping is independent of the origin recognition complex (ORC). The chain is Heterochromatin protein 1 from Drosophila melanogaster (Fruit fly).